We begin with the raw amino-acid sequence, 244 residues long: 1-(5-phosphoribosyl)-5-[(5-phosphoribosylamino)methylideneamino] imidazole-4-carboxamide isomerase (244 aa).

Aspartate 10 functions as the Proton acceptor in the catalytic mechanism. Aspartate 129 (proton donor) is an active-site residue.

This sequence belongs to the HisA/HisF family.

It is found in the cytoplasm. It catalyses the reaction 1-(5-phospho-beta-D-ribosyl)-5-[(5-phospho-beta-D-ribosylamino)methylideneamino]imidazole-4-carboxamide = 5-[(5-phospho-1-deoxy-D-ribulos-1-ylimino)methylamino]-1-(5-phospho-beta-D-ribosyl)imidazole-4-carboxamide. It participates in amino-acid biosynthesis; L-histidine biosynthesis; L-histidine from 5-phospho-alpha-D-ribose 1-diphosphate: step 4/9. The sequence is that of 1-(5-phosphoribosyl)-5-[(5-phosphoribosylamino)methylideneamino] imidazole-4-carboxamide isomerase from Rhodococcus opacus (strain B4).